The primary structure comprises 221 residues: Orotate phosphoribosyltransferase (221 aa).

Lysine 26 is a binding site for 5-phospho-alpha-D-ribose 1-diphosphate. An orotate-binding site is contributed by 34–35 (FF). Residues 72 to 73 (YK), arginine 99, lysine 100, lysine 103, histidine 105, and 124 to 132 (DDVITAGTA) each bind 5-phospho-alpha-D-ribose 1-diphosphate. 2 residues coordinate orotate: threonine 128 and arginine 156.

This sequence belongs to the purine/pyrimidine phosphoribosyltransferase family. PyrE subfamily. In terms of assembly, homodimer. Mg(2+) serves as cofactor.

It carries out the reaction orotidine 5'-phosphate + diphosphate = orotate + 5-phospho-alpha-D-ribose 1-diphosphate. Its pathway is pyrimidine metabolism; UMP biosynthesis via de novo pathway; UMP from orotate: step 1/2. Functionally, catalyzes the transfer of a ribosyl phosphate group from 5-phosphoribose 1-diphosphate to orotate, leading to the formation of orotidine monophosphate (OMP). In Colwellia psychrerythraea (strain 34H / ATCC BAA-681) (Vibrio psychroerythus), this protein is Orotate phosphoribosyltransferase.